Consider the following 149-residue polypeptide: 3-dehydroquinate dehydratase (149 aa).

The active-site Proton acceptor is the Tyr-26. Residues Asn-77, His-83, and Asp-90 each coordinate substrate. Residue His-103 is the Proton donor of the active site. Residues 104 to 105 (LS) and Arg-114 contribute to the substrate site.

The protein belongs to the type-II 3-dehydroquinase family. As to quaternary structure, homododecamer.

It carries out the reaction 3-dehydroquinate = 3-dehydroshikimate + H2O. It functions in the pathway metabolic intermediate biosynthesis; chorismate biosynthesis; chorismate from D-erythrose 4-phosphate and phosphoenolpyruvate: step 3/7. In terms of biological role, catalyzes a trans-dehydration via an enolate intermediate. In Edwardsiella ictaluri (strain 93-146), this protein is 3-dehydroquinate dehydratase.